A 1076-amino-acid polypeptide reads, in one-letter code: DNA-directed RNA polymerase subunit beta (1076 aa).

It belongs to the RNA polymerase beta chain family. In plastids the minimal PEP RNA polymerase catalytic core is composed of four subunits: alpha, beta, beta', and beta''. When a (nuclear-encoded) sigma factor is associated with the core the holoenzyme is formed, which can initiate transcription.

Its subcellular location is the plastid. The protein localises to the chloroplast. It catalyses the reaction RNA(n) + a ribonucleoside 5'-triphosphate = RNA(n+1) + diphosphate. DNA-dependent RNA polymerase catalyzes the transcription of DNA into RNA using the four ribonucleoside triphosphates as substrates. The sequence is that of DNA-directed RNA polymerase subunit beta from Agrostis stolonifera (Creeping bentgrass).